A 116-amino-acid chain; its full sequence is Non-specific lipid-transfer protein C, cotyledon-specific isoform (116 aa).

The first 24 residues, 1–24 (MKNVVFSVLLLLSFLFCLANTNEA), serve as a signal peptide directing secretion. Disulfide bonds link Cys-28/Cys-76, Cys-38/Cys-53, Cys-54/Cys-98, and Cys-74/Cys-112.

This sequence belongs to the plant LTP family.

In terms of biological role, plant non-specific lipid-transfer proteins transfer phospholipids as well as galactolipids across membranes. May play a role in wax or cutin deposition in the cell walls of expanding epidermal cells and certain secretory tissues. The protein is Non-specific lipid-transfer protein C, cotyledon-specific isoform of Ricinus communis (Castor bean).